We begin with the raw amino-acid sequence, 1070 residues long: Ubiquitin-protein ligase E3B (1070 aa).

At Met-1 the chain carries N-acetylmethionine. Residues 29 to 58 (RERSAVTIQALVRSFLCRRRLHRDIRKEID) enclose the IQ domain. A Phosphoserine modification is found at Ser-421. Residues 704-1070 (SQHAMKGVIR…ISMNTGFELS (367 aa)) form the HECT domain. Cys-1038 acts as the Glycyl thioester intermediate in catalysis.

As to expression, widely expressed. High expression is observed in developing central nervous system.

It localises to the postsynaptic density. It carries out the reaction S-ubiquitinyl-[E2 ubiquitin-conjugating enzyme]-L-cysteine + [acceptor protein]-L-lysine = [E2 ubiquitin-conjugating enzyme]-L-cysteine + N(6)-ubiquitinyl-[acceptor protein]-L-lysine.. It participates in protein modification; protein ubiquitination. E3 ubiquitin-protein ligase which accepts ubiquitin from an E2 ubiquitin-conjugating enzyme in the form of a thioester and then directly transfers the ubiquitin to targeted substrates. Ubiquitinates BCKDK and targets it for degradation, thereby regulating various metabolic processes. Involved in the positive regulation of neurite branching in hippocampal neurons and the control of neuronal spine number and morphology, through the ubiquitination of PPP3CC. This Mus musculus (Mouse) protein is Ubiquitin-protein ligase E3B (Ube3b).